The chain runs to 341 residues: Peroxisomal membrane protein import receptor PEX19 (341 aa).

Over residues 1-18 (MNENEYDNFDDLDDLLDE) the composition is skewed to acidic residues. 5 disordered regions span residues 1 to 26 (MNEN…LDEQ), 39 to 66 (DSEN…EDPE), 109 to 141 (VPRQ…FKNI), 293 to 312 (LGDS…NEEE), and 318 to 341 (LEID…CKQQ). A compositionally biased stretch (basic and acidic residues) spans 39 to 53 (DSENKEKNAESKDSD). Phosphoserine is present on Ser-61. The segment covering 113-141 (QMEQGSSSLKSNSTDKGTLNGSNPGFKNI) has biased composition (polar residues). Ser-303 bears the Phosphoserine mark. Basic and acidic residues predominate over residues 330 to 341 (LDKELTDGCKQQ). Cys-338 carries the post-translational modification Cysteine methyl ester. Residue Cys-338 is the site of S-farnesyl cysteine attachment. The propeptide at 339–341 (KQQ) is removed in mature form.

It belongs to the peroxin-19 family. Interacts (farnesylated) with PEX3; farnesylation is required for this interaction. Interacts with PEX2, PEX5, PEX10, PEX11, PEX12, PEX13, PEX14, PEX17, PEX22, PEX25, PEX30 and PEX32; the interaction requires well-defined PEX19-binding sites within the peroxisomal membrane protein targeting signal (mPTS) of the PMPs and is independent on the presence of PEX3. Interacts with VPS1.

It is found in the cytoplasm. It localises to the peroxisome membrane. The protein localises to the endoplasmic reticulum membrane. Required for proper post-translational import and stabilization of peroxisomal membrane proteins (PMPs). Acts as a cytosolic import receptor for PMPs and delivers them to the docking factor PEX3 at the peroxisomal membrane for subsequent insertion into the membrane. Acts as a chaperone in stabilizing or maintaining PMPs in the lipid bilayer. Directs PEX17, a peripheral component of the peroxisomal matrix protein translocation machinery, to peroxisomes. Stabilizes VPS1, a protein required for peroxisomal fission, at the peroxisomal membrane. Also acts in conjunction with PEX3 in the formation of peroxisomes from preperoxisomal compartments at the endoplasmic reticulum during de novo peroxisome synthesis, probably via the import of additional PMPs. This is Peroxisomal membrane protein import receptor PEX19 (PEX19) from Saccharomyces cerevisiae (strain YJM789) (Baker's yeast).